Consider the following 269-residue polypeptide: Tryptophan synthase alpha chain (269 aa).

Residues Glu49 and Asp60 each act as proton acceptor in the active site.

It belongs to the TrpA family. Tetramer of two alpha and two beta chains.

It catalyses the reaction (1S,2R)-1-C-(indol-3-yl)glycerol 3-phosphate + L-serine = D-glyceraldehyde 3-phosphate + L-tryptophan + H2O. Its pathway is amino-acid biosynthesis; L-tryptophan biosynthesis; L-tryptophan from chorismate: step 5/5. The alpha subunit is responsible for the aldol cleavage of indoleglycerol phosphate to indole and glyceraldehyde 3-phosphate. The protein is Tryptophan synthase alpha chain of Pseudomonas fluorescens (strain SBW25).